A 296-amino-acid polypeptide reads, in one-letter code: Bidirectional sugar transporter SWEET13 (296 aa).

At 1-9 (MAGLSLQHP) the chain is on the extracellular side. The helical transmembrane segment at 10 to 30 (WAFAFGLLGNLISFTTYLAPI) threads the bilayer. Positions 13–98 (AFGLLGNLIS…VMYLAYAPKK (86 aa)) constitute a MtN3/slv 1 domain. Over 31–45 (PTFYRIYKSKSTEGF) the chain is Cytoplasmic. The chain crosses the membrane as a helical span at residues 46-66 (QSVPYVVALFSAMLWIFYALI). Residues 67–71 (KSNEA) lie on the Extracellular side of the membrane. A helical membrane pass occupies residues 72–92 (LLITINAAGCVIETIYIVMYL). At 93–105 (AYAPKKAKVFTTK) the chain is on the cytoplasmic side. A helical transmembrane segment spans residues 106–126 (ILLLLNVGVFGVILLLTLLLS). Topologically, residues 127–133 (HGEQRVV) are extracellular. Residues 134–154 (SLGWVCVAFSVSVFVAPLSII) form a helical membrane-spanning segment. The MtN3/slv 2 domain maps to 134 to 217 (SLGWVCVAFS…MGLYVFYMNA (84 aa)). At 155 to 167 (KRVIQSRSVEYMP) the chain is on the cytoplasmic side. Residues 168–188 (FSLSLTLTLSAVVWFLYGLLI) form a helical membrane-spanning segment. Residues 189-192 (KDKY) lie on the Extracellular side of the membrane. A helical membrane pass occupies residues 193–213 (VALPNILGFTFGVVQMGLYVF). Residues 214–296 (YMNATPVAGE…PPRAVEVAAV (83 aa)) lie on the Cytoplasmic side of the membrane.

Belongs to the SWEET sugar transporter family. Forms homooligomers and/or heterooligomers.

It localises to the cell membrane. Its function is as follows. Mediates both low-affinity uptake and efflux of sugar across the plasma membrane. Functionally, confers blight susceptibility. Confers TAL effector-mediated susceptibility to Xanthomonas oryzae pv. oryzae. The polypeptide is Bidirectional sugar transporter SWEET13 (SWEET13) (Oryza sativa subsp. japonica (Rice)).